Consider the following 313-residue polypeptide: Formimidoylglutamase (313 aa).

Mn(2+)-binding residues include His130, Asp155, His157, Asp159, Asp241, and Asp243.

Belongs to the arginase family. Mn(2+) is required as a cofactor.

The enzyme catalyses N-formimidoyl-L-glutamate + H2O = formamide + L-glutamate. Its pathway is amino-acid degradation; L-histidine degradation into L-glutamate; L-glutamate from N-formimidoyl-L-glutamate (hydrolase route): step 1/1. Functionally, catalyzes the conversion of N-formimidoyl-L-glutamate to L-glutamate and formamide. The sequence is that of Formimidoylglutamase from Salmonella enteritidis PT4 (strain P125109).